Reading from the N-terminus, the 356-residue chain is D-alanine--D-alanine ligase (356 aa).

The ATP-grasp domain maps to 134-339 (KQLFAHRGLP…YADLITKLIE (206 aa)). Residue 167 to 222 (KDKLEFPVFVKPANLGSSVGISKCNNEEELKSGIEEAFQFDRKLVIEQGIEAREIE) coordinates ATP. Asp293, Glu306, and Asn308 together coordinate Mg(2+).

It belongs to the D-alanine--D-alanine ligase family. Mg(2+) serves as cofactor. Requires Mn(2+) as cofactor.

The protein localises to the cytoplasm. The catalysed reaction is 2 D-alanine + ATP = D-alanyl-D-alanine + ADP + phosphate + H(+). It functions in the pathway cell wall biogenesis; peptidoglycan biosynthesis. In terms of biological role, cell wall formation. In Staphylococcus carnosus (strain TM300), this protein is D-alanine--D-alanine ligase.